We begin with the raw amino-acid sequence, 179 residues long: Putative DUP240 protein DFP1 (179 aa).

The next 2 helical transmembrane spans lie at 4 to 24 (FLLF…SGVL) and 26 to 46 (PAMV…IWSF).

It belongs to the DUP/COS family.

It is found in the membrane. The chain is Putative DUP240 protein DFP1 from Saccharomyces cerevisiae (strain ATCC 204508 / S288c) (Baker's yeast).